Reading from the N-terminus, the 302-residue chain is Nucleotide-binding protein SE_0548 (302 aa).

18 to 25 is an ATP binding site; that stretch reads GMSGAGKS. GTP is bound at residue 69-72; it reads DLRG.

Belongs to the RapZ-like family.

Its function is as follows. Displays ATPase and GTPase activities. The sequence is that of Nucleotide-binding protein SE_0548 from Staphylococcus epidermidis (strain ATCC 12228 / FDA PCI 1200).